The sequence spans 121 residues: Regulator of ribonuclease activity B (121 aa).

This sequence belongs to the RraB family. Interacts with the C-terminal region of Rne.

The protein localises to the cytoplasm. Its function is as follows. Globally modulates RNA abundance by binding to RNase E (Rne) and regulating its endonucleolytic activity. Can modulate Rne action in a substrate-dependent manner by altering the composition of the degradosome. In Psychromonas ingrahamii (strain DSM 17664 / CCUG 51855 / 37), this protein is Regulator of ribonuclease activity B.